Reading from the N-terminus, the 112-residue chain is DNA-directed RNA polymerase subunit Rpo11 (112 aa).

Belongs to the archaeal Rpo11/eukaryotic RPB11/RPC19 RNA polymerase subunit family. Part of the RNA polymerase complex.

Its subcellular location is the cytoplasm. It carries out the reaction RNA(n) + a ribonucleoside 5'-triphosphate = RNA(n+1) + diphosphate. DNA-dependent RNA polymerase (RNAP) catalyzes the transcription of DNA into RNA using the four ribonucleoside triphosphates as substrates. The chain is DNA-directed RNA polymerase subunit Rpo11 from Methanopyrus kandleri (strain AV19 / DSM 6324 / JCM 9639 / NBRC 100938).